A 211-amino-acid polypeptide reads, in one-letter code: MNKGLIGKKLGMTQIFAEDGRRIAVTVVEAGPCVVVQKKSVAKDGYSAIQVGLGAKDASRANAAQIGHCKGAGAGVFTHYRELRMDNTDAYNLGDVIEAAVFEEGDLVDVTGTSIGKGFAGVIKRWGFKGGRSSHGSRFHRAPGSIGCSATPSRVFKNKKMPGQLGNEKVTVQRLKVVRVDAADNLILLGGAIPGSANGVVLIKDSVKAKK.

This sequence belongs to the universal ribosomal protein uL3 family. Part of the 50S ribosomal subunit. Forms a cluster with proteins L14 and L19.

Functionally, one of the primary rRNA binding proteins, it binds directly near the 3'-end of the 23S rRNA, where it nucleates assembly of the 50S subunit. The polypeptide is Large ribosomal subunit protein uL3 (Geobacter sp. (strain M21)).